Reading from the N-terminus, the 293-residue chain is Dioxygenase cdmA (293 aa).

The Fe cation site is built by His-135, Asp-137, and His-212.

Belongs to the PhyH family. As to quaternary structure, homodimer. It depends on Fe cation as a cofactor.

The enzyme catalyses chrodrimanin C + 2-oxoglutarate + O2 = verruculide A + succinate + CO2 + H2O. It catalyses the reaction chrodrimanin H + 2-oxoglutarate + O2 = chrodrimanin E + succinate + CO2 + H2O. It functions in the pathway secondary metabolite biosynthesis; terpenoid biosynthesis. Dioxygenase; part of the gene cluster that mediates the biosynthesis of chrodrimanin B, a meroterpenoid that acts as a potent blocker of insect GABA-gated chloride channels. The first step of the pathway is the biosynthesis of 6-hydroxymellein by the polyketide synthase cdmE. The prenyltransferase cdmH acts as a 6-hydroxymellein 5-farnesyltransferase and produces the hydrophobic metabolite verruculide C. The FAD-dependent monooxygenase cdmI further converts verruculide C into verruculide B. The terpene cyclase cdmG then produced the pentacyclic molecule 3-hydroxypentacecilide A, the backbone structure of chrodrimanin B, via folding the farnesyl moiety of the substrate into the chair-boat conformation. The short-chain dehydrogenase/reductase cdmF functions as the 3-OH dehydrogenase that oxidizes the C-3 hydroxyl group of 3-hydroxypentacecilide A and produces chrodrimanin C, the dehydrogenated product of 3-hydroxypentacecilide A. The cytochrome P450 monooxygenase cdmJ then accepts both 3-hydroxypentacecilide A and chrodrimanin C and functions as a C-7-beta-hydroxylase to produce respectively chrodrimanin H and chrodrimanin F. The dioxygenase cdmA accepts chrodrimanin H to afford chrodrimanin E, which is further transformed to chrodrimanin A by the dioxygenase cdmD. CdmA can also accept chrodrimanin C as substrate to convert it into verruculide A, which is further converted into chrodrimanin T by cdmD. The last step of the biosynthesis is proposed to be performed by the acetyltransferase cdmC which acetylates chrodrimanin A to yield chrodrimanin B. The pathway may also lead to the production of additional shunt products, including chrodrimanins T and U. The chain is Dioxygenase cdmA from Talaromyces verruculosus (Penicillium verruculosum).